Reading from the N-terminus, the 528-residue chain is Transcriptional activator protein UGA3 (528 aa).

The zn(2)-C6 fungal-type DNA-binding region spans 17–44 (CITCKIRKKRCSEDKPVCRDCRRLSFPC). Residues 55 to 62 (SLKKIKAD) carry the Nuclear localization signal motif.

UGA3 proteins associate in oligomers, at least in the presence of inducer.

It localises to the nucleus. In terms of biological role, GABA-dependent positive regulation of genes required for catabolism of GABA (UGA4, UGA1, and UGA2). In Saccharomyces cerevisiae (strain ATCC 204508 / S288c) (Baker's yeast), this protein is Transcriptional activator protein UGA3 (UGA3).